Consider the following 136-residue polypeptide: 5-hydroxyisourate hydrolase (136 aa).

The signal sequence occupies residues 1-20 (MKRYILATVIASLVAAPAMA). 3 residues coordinate substrate: His-31, Arg-69, and Tyr-133.

The protein belongs to the transthyretin family. 5-hydroxyisourate hydrolase subfamily. As to quaternary structure, homotetramer.

The protein resides in the periplasm. It catalyses the reaction 5-hydroxyisourate + H2O = 5-hydroxy-2-oxo-4-ureido-2,5-dihydro-1H-imidazole-5-carboxylate + H(+). Catalyzes the hydrolysis of 5-hydroxyisourate (HIU) to 2-oxo-4-hydroxy-4-carboxy-5-ureidoimidazoline (OHCU). In Salmonella typhimurium (strain LT2 / SGSC1412 / ATCC 700720), this protein is 5-hydroxyisourate hydrolase (hiuH).